The primary structure comprises 64 residues: Large ribosomal subunit protein bL35 (64 aa).

A disordered region spans residues Ser-19 to Thr-41. A compositionally biased stretch (basic and acidic residues) spans Glu-25–His-35.

It belongs to the bacterial ribosomal protein bL35 family.

This chain is Large ribosomal subunit protein bL35, found in Chlorobaculum tepidum (strain ATCC 49652 / DSM 12025 / NBRC 103806 / TLS) (Chlorobium tepidum).